Reading from the N-terminus, the 139-residue chain is Flagellar basal body rod protein FlgB (139 aa).

Belongs to the flagella basal body rod proteins family. In terms of assembly, the basal body constitutes a major portion of the flagellar organelle and consists of a number of rings mounted on a central rod. In Gram-negative bacteria, at least four rings, L, P, S and M are present, whereas Gram-positive bacteria lack the L and P rings. The rod consists of about 26 subunits of FlgG in the distal portion, and FlgB, FlgC and FlgF build up the proximal portion of the rod with about 6 subunits each. Rod assembly occurs by export via the flagellum-specific pathway of its constituent proteins and by their incorporation into the rod structure in the probable order of FlgB, FlgC, FlgF and FlgG. Another protein, FliE, also assembles onto the stable rod structure.

Its subcellular location is the bacterial flagellum basal body. Its function is as follows. Structural component of flagellum, the bacterial motility apparatus. Part of the rod structure of flagellar basal body. The polypeptide is Flagellar basal body rod protein FlgB (Proteus mirabilis).